Consider the following 363-residue polypeptide: Translocating chain-associated membrane protein 1-like 1 (363 aa).

The Cytoplasmic segment spans residues 1–29; sequence MGLRKKNARNPPVLSHEFMVQNHADMVSC. Residues 30-50 traverse the membrane as a helical segment; that stretch reads VGMFFVLGLMFEGTSEMSIAF. Residues 51–80 lie on the Lumenal side of the membrane; that stretch reads LTLQHGVVVPAEGLPSGSRTLYHYGVKDLA. The helical transmembrane segment at 81–101 threads the bilayer; the sequence is TVFFYMLVAIIIHATIQEYVL. Over 102–120 the chain is Cytoplasmic; that stretch reads DKLSRRLQLTKGKQNKLNE. A TLC domain is found at 116–324; that stretch reads NKLNEAGQLS…TVWLQRWLED (209 aa). A helical membrane pass occupies residues 121–141; the sequence is AGQLSVFYIVSGIWGMIILAS. Topologically, residues 142 to 159 are lumenal; the sequence is ENCLSDPTLLWKSQPHNM. A helical transmembrane segment spans residues 160 to 179; sequence MTFQMKFFYISQLAYWFHSF. Residues 180–191 are Cytoplasmic-facing; that stretch reads PELYFQKVRKQD. A helical membrane pass occupies residues 192–214; it reads IPGQLIYIGLHLFHIGGAYLLYL. Topologically, residues 215 to 218 are lumenal; the sequence is NHLG. Residues 219–241 form a helical membrane-spanning segment; the sequence is LLLLMLHYAVELLSSVCSLLYFG. Topologically, residues 242–250 are cytoplasmic; the sequence is DERYQKGLS. Residues 251–271 form a helical membrane-spanning segment; sequence LWPIVFISGRLVTLIVSVVTV. Residues 272–295 lie on the Lumenal side of the membrane; that stretch reads GLHLAGTNRNGNALSGNVNVLAAK. Residues 296-316 traverse the membrane as a helical segment; that stretch reads IAVLSSSCSIQVYITWTLTTV. At 317–363 the chain is on the cytoplasmic side; sequence WLQRWLEDANLHVCGRKRRSRARKGTENGVENPNRIDSPPKKKEKAP. The disordered stretch occupies residues 338-363; it reads ARKGTENGVENPNRIDSPPKKKEKAP. Over residues 354-363 the composition is skewed to basic and acidic residues; the sequence is SPPKKKEKAP.

Belongs to the TRAM family.

It localises to the endoplasmic reticulum membrane. Stimulatory or required for the translocation of secretory proteins across the ER membrane. This is Translocating chain-associated membrane protein 1-like 1 (Tram1l1) from Mus musculus (Mouse).